Reading from the N-terminus, the 85-residue chain is Large ribosomal subunit protein bL27 (85 aa).

The tract at residues 1-21 (MAHKKGASSSRNGRDSNAQRL) is disordered. Polar residues predominate over residues 7-19 (ASSSRNGRDSNAQ).

Belongs to the bacterial ribosomal protein bL27 family.

The protein is Large ribosomal subunit protein bL27 of Beutenbergia cavernae (strain ATCC BAA-8 / DSM 12333 / CCUG 43141 / JCM 11478 / NBRC 16432 / NCIMB 13614 / HKI 0122).